The sequence spans 587 residues: GTPase-activating protein skywalker (587 aa).

Residues Lys-75 and Arg-79 each contribute to the a 1,2-diacyl-sn-glycero-3-phospho-(1D-myo-inositol) site. The region spanning 84-275 (PINSPIRAQL…RIMDCYFHEG (192 aa)) is the Rab-GAP TBC domain. A 1,2-diacyl-sn-glycero-3-phospho-(1D-myo-inositol)-binding positions include Lys-277, Arg-281, and 335–339 (RGLST). The TLDc domain maps to 408–585 (TWTDRQFLFT…IRVLEVYGFV (178 aa)).

In terms of tissue distribution, detected in the larval ventral nerve cord and neuromuscular junction boutons (at protein level).

The protein resides in the cytoplasmic vesicle. It is found in the secretory vesicle. Its subcellular location is the synaptic vesicle membrane. The protein localises to the endosome membrane. Its function is as follows. GTPase-activating protein (GAP) for Rab35 which regulates synaptic vesicle (SV) protein recycling and turnover at the neuromuscular junction boutons and possibly ventral nerve cord via endosomal trafficking. Inhibits Rab35-mediated endosomal sorting which traffics old or dysfunctional SV proteins through a degradative endolysosomal route that involves the ESCRT pathway and the HOPS complex members dor, vps39 and rab7. This function is essential for preventing excessive degradation and turnover of vesicles from the readily releasable pool which leads to increased neurotransmission and eventually neurodegeneration. Preferentially binds phosphoinositides phosphorylated at the D5 position of the inositol ring, such as phosphatidylinositol 4,5-bisphosphate (PIP2) and phosphatidylinositol 3,4,5-trisphosphate (PIP3). Binding to phosphoinositides and thus membrane-association, is required for its function in regulating the turnover of synaptic-vesicle proteins. It is therefore likely that it is recruited to vesicle membranes with high phosphoinositide content and thereby selectively prevents endolysosomal degradation of these vesicles. In Drosophila melanogaster (Fruit fly), this protein is GTPase-activating protein skywalker.